Reading from the N-terminus, the 137-residue chain is Large ribosomal subunit protein uL16 (137 aa).

This sequence belongs to the universal ribosomal protein uL16 family. Part of the 50S ribosomal subunit.

In terms of biological role, binds 23S rRNA and is also seen to make contacts with the A and possibly P site tRNAs. The protein is Large ribosomal subunit protein uL16 of Agrobacterium fabrum (strain C58 / ATCC 33970) (Agrobacterium tumefaciens (strain C58)).